The following is a 99-amino-acid chain: Aspartyl/glutamyl-tRNA(Asn/Gln) amidotransferase subunit C (99 aa).

The protein belongs to the GatC family. As to quaternary structure, heterotrimer of A, B and C subunits.

It catalyses the reaction L-glutamyl-tRNA(Gln) + L-glutamine + ATP + H2O = L-glutaminyl-tRNA(Gln) + L-glutamate + ADP + phosphate + H(+). The catalysed reaction is L-aspartyl-tRNA(Asn) + L-glutamine + ATP + H2O = L-asparaginyl-tRNA(Asn) + L-glutamate + ADP + phosphate + 2 H(+). Its function is as follows. Allows the formation of correctly charged Asn-tRNA(Asn) or Gln-tRNA(Gln) through the transamidation of misacylated Asp-tRNA(Asn) or Glu-tRNA(Gln) in organisms which lack either or both of asparaginyl-tRNA or glutaminyl-tRNA synthetases. The reaction takes place in the presence of glutamine and ATP through an activated phospho-Asp-tRNA(Asn) or phospho-Glu-tRNA(Gln). The chain is Aspartyl/glutamyl-tRNA(Asn/Gln) amidotransferase subunit C from Corynebacterium efficiens (strain DSM 44549 / YS-314 / AJ 12310 / JCM 11189 / NBRC 100395).